Consider the following 351-residue polypeptide: Dihydroorotate dehydrogenase (quinone) (351 aa).

FMN-binding positions include 61 to 65 (AGLDK) and Thr-85. Lys-65 serves as a coordination point for substrate. A substrate-binding site is contributed by 110-114 (NRMGF). Positions 139 and 172 each coordinate FMN. Residue Asn-172 coordinates substrate. The Nucleophile role is filled by Ser-175. Position 177 (Asn-177) interacts with substrate. Positions 217 and 245 each coordinate FMN. Residue 246–247 (NT) coordinates substrate. Residues Gly-268, Gly-297, and 318–319 (YS) each bind FMN.

It belongs to the dihydroorotate dehydrogenase family. Type 2 subfamily. Monomer. The cofactor is FMN.

It localises to the cell membrane. The enzyme catalyses (S)-dihydroorotate + a quinone = orotate + a quinol. It functions in the pathway pyrimidine metabolism; UMP biosynthesis via de novo pathway; orotate from (S)-dihydroorotate (quinone route): step 1/1. In terms of biological role, catalyzes the conversion of dihydroorotate to orotate with quinone as electron acceptor. In Xanthomonas oryzae pv. oryzae (strain PXO99A), this protein is Dihydroorotate dehydrogenase (quinone).